The sequence spans 212 residues: Interleukin-6 (212 aa).

An N-terminal signal peptide occupies residues 1 to 29 (MNSLSTSAFSPVAFSLGLLLVMATAFPTP). C72 and C78 are joined by a disulfide. Phosphoserine is present on S81. A disulfide bridge connects residues C101 and C111. The tract at residues 156–175 (QKGKNPDKATTPNPTTNAGL) is disordered. Over residues 163 to 175 (KATTPNPTTNAGL) the composition is skewed to polar residues.

This sequence belongs to the IL-6 superfamily. Component of a hexamer of two molecules each of IL6, IL6R and IL6ST; first binds to IL6R to associate with the signaling subunit IL6ST. Interacts with IL6R (via the N-terminal ectodomain); this interaction may be affected by IL6R-binding with SORL1, hence decreasing IL6 cis signaling. Interacts with SORL1 (via the N-terminal ectodomain); this interaction leads to IL6 internalization and lysosomal degradation. May form a trimeric complex with the soluble SORL1 ectodomain and soluble IL6R receptor; this interaction might stabilize circulating IL6, hence promoting IL6 trans signaling.

It localises to the secreted. Functionally, cytokine with a wide variety of biological functions in immunity, tissue regeneration, and metabolism. Binds to IL6R, then the complex associates to the signaling subunit IL6ST/gp130 to trigger the intracellular IL6-signaling pathway. The interaction with the membrane-bound IL6R and IL6ST stimulates 'classic signaling', whereas the binding of IL6 and soluble IL6R to IL6ST stimulates 'trans-signaling'. Alternatively, 'cluster signaling' occurs when membrane-bound IL6:IL6R complexes on transmitter cells activate IL6ST receptors on neighboring receiver cells. IL6 is a potent inducer of the acute phase response. Rapid production of IL6 contributes to host defense during infection and tissue injury, but excessive IL6 synthesis is involved in disease pathology. In the innate immune response, is synthesized by myeloid cells, such as macrophages and dendritic cells, upon recognition of pathogens through toll-like receptors (TLRs) at the site of infection or tissue injury. In the adaptive immune response, is required for the differentiation of B cells into immunoglobulin-secreting cells. Plays a major role in the differentiation of CD4(+) T cell subsets. Essential factor for the development of T follicular helper (Tfh) cells that are required for the induction of germinal-center formation. Required to drive naive CD4(+) T cells to the Th17 lineage. Also required for proliferation of myeloma cells and the survival of plasmablast cells. In terms of biological role, acts as an essential factor in bone homeostasis and on vessels directly or indirectly by induction of VEGF, resulting in increased angiogenesis activity and vascular permeability. Induces, through 'trans-signaling' and synergistically with IL1B and TNF, the production of VEGF. Involved in metabolic controls, is discharged into the bloodstream after muscle contraction increasing lipolysis and improving insulin resistance. 'Trans-signaling' in central nervous system also regulates energy and glucose homeostasis. Mediates, through GLP-1, crosstalk between insulin-sensitive tissues, intestinal L cells and pancreatic islets to adapt to changes in insulin demand. Also acts as a myokine. Plays a protective role during liver injury, being required for maintenance of tissue regeneration. Also has a pivotal role in iron metabolism by regulating HAMP/hepcidin expression upon inflammation or bacterial infection. Through activation of IL6ST-YAP-NOTCH pathway, induces inflammation-induced epithelial regeneration. The polypeptide is Interleukin-6 (IL6) (Sus scrofa (Pig)).